The chain runs to 220 residues: 3-dehydroquinate dehydratase (220 aa).

3-dehydroquinate-binding positions include 29-31 and arginine 56; that span reads EFR. Residue histidine 116 is the Proton donor/acceptor of the active site. Residue lysine 142 is the Schiff-base intermediate with substrate of the active site. Arginine 180, serine 200, and glutamine 204 together coordinate 3-dehydroquinate.

Belongs to the type-I 3-dehydroquinase family. In terms of assembly, homodimer.

The catalysed reaction is 3-dehydroquinate = 3-dehydroshikimate + H2O. Its pathway is metabolic intermediate biosynthesis; chorismate biosynthesis; chorismate from D-erythrose 4-phosphate and phosphoenolpyruvate: step 3/7. Involved in the third step of the chorismate pathway, which leads to the biosynthesis of aromatic amino acids. Catalyzes the cis-dehydration of 3-dehydroquinate (DHQ) and introduces the first double bond of the aromatic ring to yield 3-dehydroshikimate. This chain is 3-dehydroquinate dehydratase, found in Methanocaldococcus jannaschii (strain ATCC 43067 / DSM 2661 / JAL-1 / JCM 10045 / NBRC 100440) (Methanococcus jannaschii).